The following is a 539-amino-acid chain: Kynureninase 2 (539 aa).

Positions 60-87 are disordered; sequence DGGVAGETKEPRVPNGVSSATKPNGTVN. Residues 75–87 show a composition bias toward polar residues; that stretch reads GVSSATKPNGTVN. Residues L171, T172, 199-202, D290, H293, and Y315 each bind pyridoxal 5'-phosphate; that span reads FPSD. K316 is subject to N6-(pyridoxal phosphate)lysine. The segment covering 340–352 has biased composition (gly residues); the sequence is GGGGSGGVGGGRG. Positions 340–363 are disordered; it reads GGGGSGGVGGGRGEGGDGDGGDGG. Pyridoxal 5'-phosphate-binding residues include W379 and N407.

Belongs to the kynureninase family. As to quaternary structure, homodimer. Pyridoxal 5'-phosphate serves as cofactor.

The protein resides in the cytoplasm. It carries out the reaction L-kynurenine + H2O = anthranilate + L-alanine + H(+). The enzyme catalyses 3-hydroxy-L-kynurenine + H2O = 3-hydroxyanthranilate + L-alanine + H(+). It functions in the pathway amino-acid degradation; L-kynurenine degradation; L-alanine and anthranilate from L-kynurenine: step 1/1. The protein operates within cofactor biosynthesis; NAD(+) biosynthesis; quinolinate from L-kynurenine: step 2/3. In terms of biological role, catalyzes the cleavage of L-kynurenine (L-Kyn) and L-3-hydroxykynurenine (L-3OHKyn) into anthranilic acid (AA) and 3-hydroxyanthranilic acid (3-OHAA), respectively. This is Kynureninase 2 from Chaetomium globosum (strain ATCC 6205 / CBS 148.51 / DSM 1962 / NBRC 6347 / NRRL 1970) (Soil fungus).